A 257-amino-acid chain; its full sequence is Transmembrane protein 101 (257 aa).

Helical transmembrane passes span 21–40 (VLLTRCPFWGCFSQLMLYAE), 52–72 (VPYLYFDMGAAVLCASFMSFG), 77–97 (WFALGAALQLAISTYAAYIGG), 110–130 (YSRTVAIIGGFLVLASGAGEL), 139–159 (SLQSTGQVFLGIYLICVAYSL), 182–202 (LFFVLYGILALAFLSGYYVTL), 206–226 (ILAVLLPPVMLLIDGNVAYWH), and 233–253 (FWNQMKLLGESVGIFGTAVIL).

The protein localises to the membrane. In terms of biological role, may activate NF-kappa-B signaling pathways. The protein is Transmembrane protein 101 (TMEM101) of Homo sapiens (Human).